A 450-amino-acid chain; its full sequence is Tubulin alpha chain (450 aa).

8 residues coordinate GTP: Gln-11, Glu-71, Ser-140, Gly-144, Thr-145, Thr-179, Asn-206, and Asn-228. Residue Glu-71 coordinates Mg(2+). The active site involves Glu-254.

Belongs to the tubulin family. As to quaternary structure, dimer of alpha and beta chains. A typical microtubule is a hollow water-filled tube with an outer diameter of 25 nm and an inner diameter of 15 nM. Alpha-beta heterodimers associate head-to-tail to form protofilaments running lengthwise along the microtubule wall with the beta-tubulin subunit facing the microtubule plus end conferring a structural polarity. Microtubules usually have 13 protofilaments but different protofilament numbers can be found in some organisms and specialized cells. It depends on Mg(2+) as a cofactor.

It localises to the cytoplasm. It is found in the cytoskeleton. It catalyses the reaction GTP + H2O = GDP + phosphate + H(+). Its function is as follows. Tubulin is the major constituent of microtubules, a cylinder consisting of laterally associated linear protofilaments composed of alpha- and beta-tubulin heterodimers. Microtubules grow by the addition of GTP-tubulin dimers to the microtubule end, where a stabilizing cap forms. Below the cap, tubulin dimers are in GDP-bound state, owing to GTPase activity of alpha-tubulin. The chain is Tubulin alpha chain from Zymoseptoria tritici (Speckled leaf blotch fungus).